Consider the following 304-residue polypeptide: Voltage-dependent anion channel-forming protein YneE (304 aa).

The next 4 membrane-spanning stretches (helical) occupy residues 28–48 (LLLN…YTHL), 50–70 (IKFT…FLGF), 194–214 (VLAG…TLIL), and 220–240 (LFCI…TPFI).

Belongs to the anion channel-forming bestrophin (TC 1.A.46) family.

Its subcellular location is the cell membrane. This chain is Voltage-dependent anion channel-forming protein YneE (yneE), found in Escherichia coli O157:H7.